Reading from the N-terminus, the 94-residue chain is MLKPLENRVVLRVKEEEEKSMGGIVLTSASQEKPQTAEVVAVGEGKTNHHGTLISPLVKVGDTVIFEKFAGTTVKMDGEEFLILKDSDLLAIVE.

The protein belongs to the GroES chaperonin family. In terms of assembly, heptamer of 7 subunits arranged in a ring. Interacts with the chaperonin GroEL.

The protein resides in the cytoplasm. In terms of biological role, together with the chaperonin GroEL, plays an essential role in assisting protein folding. The GroEL-GroES system forms a nano-cage that allows encapsulation of the non-native substrate proteins and provides a physical environment optimized to promote and accelerate protein folding. GroES binds to the apical surface of the GroEL ring, thereby capping the opening of the GroEL channel. The polypeptide is Co-chaperonin GroES (Lactococcus lactis subsp. lactis (strain IL1403) (Streptococcus lactis)).